A 128-amino-acid chain; its full sequence is Large ribosomal subunit protein bL17 (128 aa).

This sequence belongs to the bacterial ribosomal protein bL17 family. Part of the 50S ribosomal subunit. Contacts protein L32.

The protein is Large ribosomal subunit protein bL17 of Tolumonas auensis (strain DSM 9187 / NBRC 110442 / TA 4).